A 462-amino-acid chain; its full sequence is Chromosomal replication initiator protein DnaA (462 aa).

The segment at 1–84 (MAVSLWQQCI…RFDIGSRPSA (84 aa)) is domain I, interacts with DnaA modulators. Positions 84-125 (ARTVQPAPAAPRPTTGHTQTKARVGTAFNIQAEPMANANHRS) are domain II. Positions 126 to 342 (NINPTYQFDN…GALNRVIANA (217 aa)) are domain III, AAA+ region. ATP-binding residues include Gly-170, Gly-172, Lys-173, and Thr-174. The segment at 343–462 (NFTGRPITID…YANLIRTLSS (120 aa)) is domain IV, binds dsDNA.

It belongs to the DnaA family. In terms of assembly, oligomerizes as a right-handed, spiral filament on DNA at oriC.

Its subcellular location is the cytoplasm. In terms of biological role, plays an essential role in the initiation and regulation of chromosomal replication. ATP-DnaA binds to the origin of replication (oriC) to initiate formation of the DNA replication initiation complex once per cell cycle. Binds the DnaA box (a 9 base pair repeat at the origin) and separates the double-stranded (ds)DNA. Forms a right-handed helical filament on oriC DNA; dsDNA binds to the exterior of the filament while single-stranded (ss)DNA is stabiized in the filament's interior. The ATP-DnaA-oriC complex binds and stabilizes one strand of the AT-rich DNA unwinding element (DUE), permitting loading of DNA polymerase. After initiation quickly degrades to an ADP-DnaA complex that is not apt for DNA replication. Binds acidic phospholipids. The polypeptide is Chromosomal replication initiator protein DnaA (Shewanella denitrificans (strain OS217 / ATCC BAA-1090 / DSM 15013)).